We begin with the raw amino-acid sequence, 239 residues long: Increased recombination centers protein 22-1 (239 aa).

Positions 1 to 19 (MKLSTIFTAFAATIATVAG) are cleaved as a signal peptide. Residues 20 to 161 (YETTGSKQTV…AAVSFFDPRL (142 aa)) lie on the Lumenal side of the membrane. A helical membrane pass occupies residues 162 to 182 (IFLELVLLITFAGLIYVGYEI). Residues 183-239 (WGKQYFKGVASVKAKKVSAAKASSPVASGPSTTSATGYDTNWIPESHLKQKKTKKVN) are Cytoplasmic-facing. The segment covering 201–213 (AAKASSPVASGPS) has biased composition (low complexity). The tract at residues 201 to 222 (AAKASSPVASGPSTTSATGYDT) is disordered.

Belongs to the IRC22 family.

It is found in the endoplasmic reticulum membrane. In terms of biological role, is probably involved in a pathway contributing to genomic integrity. The chain is Increased recombination centers protein 22-1 (IRC22-1) from Candida albicans (strain WO-1) (Yeast).